The sequence spans 242 residues: tRNA (guanine-N(1)-)-methyltransferase (242 aa).

S-adenosyl-L-methionine-binding positions include glycine 112 and 131–136 (LGDFIL).

Belongs to the RNA methyltransferase TrmD family. In terms of assembly, homodimer.

The protein resides in the cytoplasm. The catalysed reaction is guanosine(37) in tRNA + S-adenosyl-L-methionine = N(1)-methylguanosine(37) in tRNA + S-adenosyl-L-homocysteine + H(+). Functionally, specifically methylates guanosine-37 in various tRNAs. This Crocosphaera subtropica (strain ATCC 51142 / BH68) (Cyanothece sp. (strain ATCC 51142)) protein is tRNA (guanine-N(1)-)-methyltransferase.